The primary structure comprises 443 residues: Aklavinone 7-beta-L-rhodosaminyltransferase (443 aa).

Residues 1 to 23 (MRVLLTSFALDAHFNGSVPLAWA) form the signal peptide.

It belongs to the glycosyltransferase 28 family.

It carries out the reaction dTDP-beta-L-rhodosamine + aklavinone = aclacinomycin T + dTDP + 2 H(+). With respect to regulation, the activity of AknS is substantially increased by the addition of the accessory protein AknT. In terms of biological role, involved in the biosynthesis of the anthracycline antitumor agent aclacinomycin A. Catalyzes the transfer of the proximal deoxyhexose, L-rhodosamine, from dTDP-beta-L-rhodosamine to the C7-OH of aklavinone aglycone to yield aclacinomycin T (rhodosaminyl-aklavinone). It can also use dTDP-2-deoxy-beta-L-fucose, TDP-2-deoxyfucose, dTDP-4-amino-2-deoxyrhamnose, TDP-L-rhodosamine as sugar donor and epsilon-rhodomycinone as sugar acceptor. This chain is Aklavinone 7-beta-L-rhodosaminyltransferase, found in Streptomyces galilaeus.